Consider the following 266-residue polypeptide: Orcokinin peptides type B (266 aa).

The signal sequence occupies residues 1 to 20 (MTAQMFTIALLLSLSAIAAA). 3 propeptides span residues 21–46 (GTIK…GAPV), 240–246 (DYDVFPD), and 264–266 (NVE).

It belongs to the orcokinin family.

Its subcellular location is the secreted. Functionally, myotropic peptides that enhance both the frequency and amplitude of spontaneous hindgut contractions. This is Orcokinin peptides type B from Procambarus clarkii (Red swamp crayfish).